A 399-amino-acid chain; its full sequence is Forkhead box protein Q1 (399 aa).

A disordered region spans residues 1 to 112 (MKLEVFAPRA…EGARSKPYTR (112 aa)). A compositionally biased stretch (low complexity) spans 32-54 (LSAAGDDSLGSDGDCAANSPAAG). The span at 55-66 (SGAGDLEGGGGE) shows a compositional bias: gly residues. Residues 114 to 205 (PKPPYSYIAL…SEYTFADGVF (92 aa)) constitute a DNA-binding region (fork-head). The disordered stretch occupies residues 211-263 (RLSHRTTVSASGYGGGSPPGPAGTPQPAPTAGSSPIARSPARQEEGSSPASKF). Residues 228–238 (PPGPAGTPQPA) show a composition bias toward pro residues.

It localises to the nucleus. Functionally, plays a role in hair follicle differentiation. This chain is Forkhead box protein Q1 (Foxq1), found in Rattus norvegicus (Rat).